Reading from the N-terminus, the 948-residue chain is Coatomer subunit beta-2 (948 aa).

HEAT repeat units lie at residues 49–87, 92–126, 127–164, 274–311, 312–349, and 391–428; these read ETIP…TDSK, PEMI…MKET, EIVE…LPHG, TAIR…TLHR, DIMV…HHNI, and EVAS…TNPK.

Oligomeric complex that consists of at least the alpha, beta, beta', gamma, delta, epsilon and zeta subunits.

Its subcellular location is the cytoplasm. It localises to the golgi apparatus membrane. The protein localises to the cytoplasmic vesicle. The protein resides in the COPI-coated vesicle membrane. In terms of biological role, the coatomer is a cytosolic protein complex that binds to dilysine motifs and reversibly associates with Golgi non-clathrin-coated vesicles, which further mediate biosynthetic protein transport from the ER, via the Golgi up to the trans Golgi network. Coatomer complex is required for budding from Golgi membranes, and is essential for the retrograde Golgi-to-ER transport of dilysine-tagged proteins. This is Coatomer subunit beta-2 from Arabidopsis thaliana (Mouse-ear cress).